The primary structure comprises 273 residues: Histone H1.2 (273 aa).

Residues 1-63 form a disordered region; that stretch reads MSIEEENVPT…TKKKTTSSHP (63 aa). Position 2 is an N-acetylserine (Ser-2). Ser-14 is subject to Phosphoserine. Positions 33–59 are enriched in basic residues; sequence GKSKKTTTAKATKKPVKAAAPTKKKTT. The 70-residue stretch at 61–130 folds into the H15 domain; sequence SHPTYEEMIK…KVKASFKIPS (70 aa). Glycyl lysine isopeptide (Lys-Gly) (interchain with G-Cter in ubiquitin) cross-links involve residues Lys-156 and Lys-165. Low complexity-rich tracts occupy residues 193-216 and 237-256; these read KVTAAKPKSKSVAAVSKTKAVAAK and KKVAAPAKKVAVTKKAPAKS. Positions 193–273 are disordered; the sequence is KVTAAKPKSK…KRASTRKAKK (81 aa). A compositionally biased stretch (basic residues) spans 257–273; sequence VKVKSPAKRASTRKAKK.

The protein belongs to the histone H1/H5 family.

It is found in the nucleus. It localises to the chromosome. Functionally, histones H1 are necessary for the condensation of nucleosome chains into higher-order structures. The protein is Histone H1.2 of Arabidopsis thaliana (Mouse-ear cress).